The following is a 472-amino-acid chain: NADH-quinone oxidoreductase subunit N (472 aa).

A run of 14 helical transmembrane segments spans residues 5-25 (LLTT…IGLL), 36-56 (AYAA…QYGI), 77-97 (IFLV…DGLP), 103-123 (FYAL…ANDL), 126-146 (LYVG…YILG), 158-178 (LLLG…LYGL), 197-217 (LAIA…AVPF), 229-249 (PTPV…AVLV), 264-284 (WLTV…VVAI), 292-309 (MLAY…VGLM), 319-339 (ILFY…VATA), 363-383 (ASVM…AGFV), 396-416 (GVLW…YYYL), and 441-461 (LTVI…GPLA).

Belongs to the complex I subunit 2 family. NDH-1 is composed of 14 different subunits. Subunits NuoA, H, J, K, L, M, N constitute the membrane sector of the complex.

It is found in the cell membrane. The catalysed reaction is a quinone + NADH + 5 H(+)(in) = a quinol + NAD(+) + 4 H(+)(out). Its function is as follows. NDH-1 shuttles electrons from NADH, via FMN and iron-sulfur (Fe-S) centers, to quinones in the respiratory chain. The immediate electron acceptor for the enzyme in this species is believed to be a menaquinone. Couples the redox reaction to proton translocation (for every two electrons transferred, four hydrogen ions are translocated across the cytoplasmic membrane), and thus conserves the redox energy in a proton gradient. The sequence is that of NADH-quinone oxidoreductase subunit N from Heliobacterium modesticaldum (strain ATCC 51547 / Ice1).